Consider the following 459-residue polypeptide: uncharacterized protein (459 aa).

At lysine 285 the chain carries N6-(pyridoxal phosphate)lysine.

It belongs to the class-III pyridoxal-phosphate-dependent aminotransferase family.

The protein resides in the cytoplasm. This is an uncharacterized protein from Schizosaccharomyces pombe (strain 972 / ATCC 24843) (Fission yeast).